The sequence spans 459 residues: ATP synthase subunit beta 1 (459 aa).

148 to 155 (GGAGVGKT) is a binding site for ATP.

It belongs to the ATPase alpha/beta chains family. As to quaternary structure, F-type ATPases have 2 components, CF(1) - the catalytic core - and CF(0) - the membrane proton channel. CF(1) has five subunits: alpha(3), beta(3), gamma(1), delta(1), epsilon(1). CF(0) has three main subunits: a(1), b(2) and c(9-12). The alpha and beta chains form an alternating ring which encloses part of the gamma chain. CF(1) is attached to CF(0) by a central stalk formed by the gamma and epsilon chains, while a peripheral stalk is formed by the delta and b chains.

The protein resides in the cell inner membrane. The enzyme catalyses ATP + H2O + 4 H(+)(in) = ADP + phosphate + 5 H(+)(out). In terms of biological role, produces ATP from ADP in the presence of a proton gradient across the membrane. The catalytic sites are hosted primarily by the beta subunits. The polypeptide is ATP synthase subunit beta 1 (Nitrosospira multiformis (strain ATCC 25196 / NCIMB 11849 / C 71)).